A 398-amino-acid chain; its full sequence is uncharacterized protein (398 aa).

This is an uncharacterized protein from Neisseria meningitidis serogroup B (strain ATCC BAA-335 / MC58).